Here is an 823-residue protein sequence, read N- to C-terminus: Adhesion G protein-coupled receptor E2 (823 aa).

Positions 1-23 (MGGRVFLVFLAFCVWLTLPGAET) are cleaved as a signal peptide. The Extracellular portion of the chain corresponds to 24–540 (QDSRGCARWC…EEDPVLTVIT (517 aa)). The region spanning 25–66 (DSRGCARWCPQDSSCVNATACRCNPGFSSFSEIITTPMETCD) is the EGF-like 1 domain. Cystine bridges form between C29–C39, C33–C45, C47–C65, C71–C85, C79–C94, C96–C117, C123–C136, C130–C145, C147–C161, C167–C180, C174–C189, C191–C210, C216–C229, C223–C238, and C240–C259. Residue N41 is glycosylated (N-linked (GlcNAc...) asparagine). The region spanning 67-118 (DINECATLSKVSCGKFSDCWNTEGSYDCVCSPGYEPVSGAKTFKNESENTCQ) is the EGF-like 2; calcium-binding domain. N-linked (GlcNAc...) asparagine glycosylation is present at N111. One can recognise an EGF-like 3; calcium-binding domain in the interval 119 to 162 (DVDECQQNPRLCKSYGTCVNTLGSYTCQCLPGFKLKPEDPKLCT). The EGF-like 4; calcium-binding domain occupies 163–211 (DVNECTSGQNPCHSSTHCLNNVGSYQCRCRPGWQPIPGSPNGPNNTVCE). A glycan (N-linked (GlcNAc...) asparagine) is linked at N206. The EGF-like 5; calcium-binding domain occupies 212–260 (DVDECSSGQHQCDSSTVCFNTVGSYSCRCRPGWKPRHGIPNNQKDTVCE). N-linked (GlcNAc...) asparagine glycosylation is found at N298, N347, N354, N456, and N460. The region spanning 354 to 530 (NFSYPAGTEL…AVLMAHYDVQ (177 aa)) is the GAIN-B domain. 2 cysteine pairs are disulfide-bonded: C482-C512 and C500-C514. The GPS stretch occupies residues 482-530 (CVFWEHGQNGCGHWATTGCSTIGTRDTSTICRCTHLSSFAVLMAHYDVQ). The helical transmembrane segment at 541-561 (YMGLSVSLLCLLLAALTFLLC) threads the bilayer. The Cytoplasmic portion of the chain corresponds to 562–569 (KAIQNTST). The chain crosses the membrane as a helical span at residues 570–590 (SLHLQLSLCLFLAHLLFLVAI). At 591 to 605 (DQTGHKVLCSIIAGT) the chain is on the extracellular side. Residues 606-626 (LHYLYLATLTWMLLEALYLFL) traverse the membrane as a helical segment. Residues 627–644 (TARNLTVVNYSSINRFMK) are Cytoplasmic-facing. A helical membrane pass occupies residues 645–665 (KLMFPVGYGVPAVTVAISAAS). Over 666–683 (RPHLYGTPSRCWLQPEKG) the chain is Extracellular. Residues 684-704 (FIWGFLGPVCAIFSVNLVLFL) form a helical membrane-spanning segment. The Cytoplasmic portion of the chain corresponds to 705 to 735 (VTLWILKNRLSSLNSEVSTLRNTRMLAFKAT). A helical transmembrane segment spans residues 736–756 (AQLFILGCTWCLGILQVGPAA). Residues 757–760 (RVMA) lie on the Extracellular side of the membrane. The chain crosses the membrane as a helical span at residues 761-781 (YLFTIINSLQGVFIFLVYCLL). Residues 782 to 823 (SQQVREQYGKWSKGIRKLKTESEMHTLSSSAKADTSKPSTVN) are Cytoplasmic-facing.

It belongs to the G-protein coupled receptor 2 family. Adhesion G-protein coupled receptor (ADGR) subfamily. Forms a heterodimer, consisting of a large extracellular region non-covalently linked to a seven-transmembrane moiety. Interacts with chondroitin sulfate; the interaction with chondroitin sulfate is calcium-dependent. Interacts with CD55. Post-translationally, autoproteolytically cleaved into 2 subunits, an extracellular alpha subunit and a seven-transmembrane beta subunit. In terms of tissue distribution, expression is restricted to myeloid cells. Highest expression was found in peripheral blood leukocytes, followed by spleen and lymph nodes, with intermediate to low levels in thymus, bone marrow, fetal liver, placenta, and lung, and no expression in heart, brain, skeletal muscle, kidney, or pancreas. Expression is also detected in monocyte/macrophage and Jurkat cell lines but not in other cell lines tested. High expression in mast cells.

The protein localises to the cell membrane. Its subcellular location is the cell projection. It localises to the ruffle membrane. Its function is as follows. Cell surface receptor that binds to the chondroitin sulfate moiety of glycosaminoglycan chains and promotes cell attachment. Promotes granulocyte chemotaxis, degranulation and adhesion. In macrophages, promotes the release of inflammatory cytokines, including IL8 and TNF. Signals probably through G-proteins. Is a regulator of mast cell degranulation. This Homo sapiens (Human) protein is Adhesion G protein-coupled receptor E2.